Consider the following 216-residue polypeptide: Minor fimbrial subunit HifD (216 aa).

Positions 1-19 (MQKTPKKLTALCHQQSTAS) are cleaved as a signal peptide. C20 is lipidated: N-palmitoyl cysteine. A lipid anchor (S-diacylglycerol cysteine) is attached at C20. The tract at residues 159–180 (PINVDGSQANSEKAPDTGKEQN) is disordered.

The protein belongs to the fimbrial protein family.

The protein localises to the cell membrane. It localises to the fimbrium. Its function is as follows. May be a minor structural protein required for pilus biogenesis. The sequence is that of Minor fimbrial subunit HifD (hifD) from Haemophilus influenzae.